The following is a 360-amino-acid chain: Phospho-N-acetylmuramoyl-pentapeptide-transferase (360 aa).

10 helical membrane-spanning segments follow: residues 21-41 (YITF…LWIG), 73-93 (TMGG…WADL), 98-118 (VWFV…DDYW), 132-152 (WKYF…YAVG), 168-188 (FMPQ…VGTS), 199-219 (GLAI…AWAT), 236-256 (AGEL…FLWY), 263-283 (VFMG…IAVL), 288-308 (LLLV…ILQV), and 338-358 (VIVR…VTLK).

This sequence belongs to the glycosyltransferase 4 family. MraY subfamily. The cofactor is Mg(2+).

It is found in the cell inner membrane. It carries out the reaction UDP-N-acetyl-alpha-D-muramoyl-L-alanyl-gamma-D-glutamyl-meso-2,6-diaminopimeloyl-D-alanyl-D-alanine + di-trans,octa-cis-undecaprenyl phosphate = di-trans,octa-cis-undecaprenyl diphospho-N-acetyl-alpha-D-muramoyl-L-alanyl-D-glutamyl-meso-2,6-diaminopimeloyl-D-alanyl-D-alanine + UMP. Its pathway is cell wall biogenesis; peptidoglycan biosynthesis. Functionally, catalyzes the initial step of the lipid cycle reactions in the biosynthesis of the cell wall peptidoglycan: transfers peptidoglycan precursor phospho-MurNAc-pentapeptide from UDP-MurNAc-pentapeptide onto the lipid carrier undecaprenyl phosphate, yielding undecaprenyl-pyrophosphoryl-MurNAc-pentapeptide, known as lipid I. The chain is Phospho-N-acetylmuramoyl-pentapeptide-transferase from Actinobacillus pleuropneumoniae serotype 3 (strain JL03).